Reading from the N-terminus, the 505-residue chain is MVSIRPDEISSILKQQITDYDQSVSVSNVGTVLQIGDGIARIYGLDQVMAGELLEFEDGTEGIALNLEDDNVGAVLMGEALGVQEGSNVKSTGKIASVPVGEAMQGRVVNPLGQPIDGKGEIPTSDTRLIEEMAPGIIKRRSVHEPMQTGITSIDAMIPVGRGQRELIIGDRQTGKSAIAIDTIINQKGQDVVCVYVAIGQKSASVANIVEVLRERGALDYTVVVSAGASEPAALQYLAPYTGAAIAEHFMYQGKATLVIYDDLTKQAQAYRQMSLLLKRPPGREAYPGDVFYLHSRLLERAAKLSDAMGGGSMTALPIIETQAGDVSAYIPTNVISITDGQIFLSADLFNSGLRPAINVGISVSRVGGAAQTKAIKKIAGTLKLELAQFDELAAFSQFASDLDEATQQQLERGKRLRELLKQPQFSPLNLAEQVAVVYAGVKGLIDEVPVEEVTKFATELREYLKLNKAEFIEEILKEKKLNDGLEATLKEVINEVKSSMLATV.

Position 170–177 (170–177) interacts with ATP; it reads GDRQTGKS.

Belongs to the ATPase alpha/beta chains family. In terms of assembly, F-type ATPases have 2 components, CF(1) - the catalytic core - and CF(0) - the membrane proton channel. CF(1) has five subunits: alpha(3), beta(3), gamma(1), delta(1), epsilon(1). CF(0) has four main subunits: a(1), b(1), b'(1) and c(9-12).

It localises to the cellular thylakoid membrane. It catalyses the reaction ATP + H2O + 4 H(+)(in) = ADP + phosphate + 5 H(+)(out). In terms of biological role, produces ATP from ADP in the presence of a proton gradient across the membrane. The alpha chain is a regulatory subunit. This is ATP synthase subunit alpha from Prochlorococcus marinus (strain MIT 9215).